Consider the following 80-residue polypeptide: Small ribosomal subunit protein uS17 (80 aa).

The protein belongs to the universal ribosomal protein uS17 family. Part of the 30S ribosomal subunit.

In terms of biological role, one of the primary rRNA binding proteins, it binds specifically to the 5'-end of 16S ribosomal RNA. The sequence is that of Small ribosomal subunit protein uS17 from Beijerinckia indica subsp. indica (strain ATCC 9039 / DSM 1715 / NCIMB 8712).